A 316-amino-acid chain; its full sequence is Ribosomal RNA small subunit methyltransferase H (316 aa).

S-adenosyl-L-methionine contacts are provided by residues Gly42 to His44, Asp62, Phe86, Asp104, and Gln111.

It belongs to the methyltransferase superfamily. RsmH family.

Its subcellular location is the cytoplasm. The catalysed reaction is cytidine(1402) in 16S rRNA + S-adenosyl-L-methionine = N(4)-methylcytidine(1402) in 16S rRNA + S-adenosyl-L-homocysteine + H(+). In terms of biological role, specifically methylates the N4 position of cytidine in position 1402 (C1402) of 16S rRNA. This is Ribosomal RNA small subunit methyltransferase H from Polynucleobacter asymbioticus (strain DSM 18221 / CIP 109841 / QLW-P1DMWA-1) (Polynucleobacter necessarius subsp. asymbioticus).